We begin with the raw amino-acid sequence, 194 residues long: Peptidyl-tRNA hydrolase (194 aa).

Tyr-17 provides a ligand contact to tRNA. The Proton acceptor role is filled by His-22. Tyr-68, Asn-70, and Asn-116 together coordinate tRNA.

This sequence belongs to the PTH family. As to quaternary structure, monomer.

The protein localises to the cytoplasm. The enzyme catalyses an N-acyl-L-alpha-aminoacyl-tRNA + H2O = an N-acyl-L-amino acid + a tRNA + H(+). In terms of biological role, hydrolyzes ribosome-free peptidyl-tRNAs (with 1 or more amino acids incorporated), which drop off the ribosome during protein synthesis, or as a result of ribosome stalling. Its function is as follows. Catalyzes the release of premature peptidyl moieties from peptidyl-tRNA molecules trapped in stalled 50S ribosomal subunits, and thus maintains levels of free tRNAs and 50S ribosomes. This chain is Peptidyl-tRNA hydrolase, found in Pseudoalteromonas translucida (strain TAC 125).